Reading from the N-terminus, the 2367-residue chain is Toxin B (2367 aa).

A four-helical bundle region spans residues 2-91; the sequence is SLVNRKQLEK…EILELKNSNL (90 aa). Residues 96-469 form the GT44 domain; that stretch reads KNLHFIWIGG…YPEANTTITL (374 aa). The interval 96 to 469 is glucosyltransferase region; sequence KNLHFIWIGG…YPEANTTITL (374 aa). UDP-alpha-D-glucose is bound by residues 101 to 103, asparagine 139, 269 to 273, and 286 to 288; these read IWI, SDILR, and DVD. Aspartate 286, aspartate 288, and glutamate 516 together coordinate Mg(2+). 519–521 provides a ligand contact to UDP-alpha-D-glucose; the sequence is SLW. The segment at 545–800 is autoprocessing region; the sequence is GEDDNLDFSQ…KSKNLPELST (256 aa). The Zn(2+) site is built by glutamate 546 and aspartate 547. The Peptidase C80 domain maps to 568–775; sequence SSSTKSSERG…EESIIKDISS (208 aa). 3 residues coordinate 1D-myo-inositol hexakisphosphate: tyrosine 578, lysine 601, and lysine 648. Histidine 654 serves as a coordination point for Zn(2+). The For protease activity role is filled by histidine 654. Cysteine 699 functions as the Nucleophile; for protease activity in the catalytic mechanism. Histidine 758 is a binding site for Zn(2+). Residues lysine 765, lysine 776, and lysine 793 each contribute to the 1D-myo-inositol hexakisphosphate site. The translocation region stretch occupies residues 801–1501; it reads LLQEIRNNSN…VVLIIKVYMD (701 aa). 3 interaction with host frizzled receptors FZD1, FZD2 and FZD7 regions span residues 1434 to 1439, 1487 to 1512, and 1598 to 1600; these read LKTLMA, SELS…YYSN, and SLK. Cell wall-binding repeat units lie at residues 1833–1852, 1854–1873, 1876–1895, 1926–1945, 1946–1965, 1967–1986, 1987–2006, 2007–2026, 2057–2076, 2077–2097, 2099–2118, 2119–2138, 2139–2158, 2209–2231, 2233–2252, 2253–2272, 2273–2292, 2323–2342, and 2343–2362; these read VSGL…PIKN, ITGF…DNGG, SVGE…NGVL, FTGK…NYRA, AIEW…DTGR, FKGL…DGIM, QKGF…SGVM, KSGY…NGEM, YSGI…SFTA, VVGW…NTAE, SIGI…SGIM, QIGF…SGIV, ESGM…NGLV, ETGW…EAKK, YKGI…NGIM, RTGL…DGEM, QYGY…DGIM, YTGW…EYIA, and ATGS…DTAQ. Positions 1835-2367 are receptor-binding (CROPS) region; it reads GLVYINDSLY…PDTAQLVISE (533 aa).

Belongs to the clostridial glucosylating toxin (LCGT) family. In terms of assembly, interacts with host FZD1. Interacts with host FZD2; interaction promotes toxin entry into host cell and occupies the binding site for Wnt-adducted palmitoleate in FZD2, leading to prevent Wnt-binding and downstream Wnt signaling. Interacts with host FZD7. Interacts with host CSPG4. Interacts with host NECTIN3/PVRL3. The cofactor is Zn(2+). Mn(2+) is required as a cofactor. Requires Mg(2+) as cofactor. Undergoes autocatalytic cleavage to release the N-terminal part (Glucosyltransferase TcdB), which constitutes the active part of the toxin, in the host cytosol. 1D-myo-inositol hexakisphosphate-binding (InsP6) activates the peptidase C80 domain and promotes autoprocessing.

It localises to the secreted. It is found in the host endosome membrane. The protein localises to the host cytoplasm. The protein resides in the host cytosol. Its subcellular location is the host cell membrane. The enzyme catalyses L-threonyl-[protein] + UDP-alpha-D-glucose = 3-O-(alpha-D-glucosyl)-L-threonyl-[protein] + UDP + H(+). Protease activity is activated upon binding to 1D-myo-inositol hexakisphosphate (InsP6), which induces conformational reorganization. Its function is as follows. Precursor of a cytotoxin that targets and disrupts the colonic epithelium, inducing the host inflammatory and innate immune responses and resulting in diarrhea and pseudomembranous colitis. TcdB constitutes the main toxin that mediates the pathology of C.difficile infection, an opportunistic pathogen that colonizes the colon when the normal gut microbiome is disrupted. Compared to TcdA, TcdB is more virulent and more important for inducing the host inflammatory and innate immune responses. This form constitutes the precursor of the toxin: it enters into host cells and mediates autoprocessing to release the active toxin (Glucosyltransferase TcdB) into the host cytosol. Targets colonic epithelia by binding to the frizzled receptors FZD1, FZD2 and FZD7, and enters host cells via clathrin-mediated endocytosis. Frizzled receptors constitute the major host receptors in the colonic epithelium, but other receptors, such as CSPG4 or NECTIN3/PVRL3, have been identified. Binding to carbohydrates and sulfated glycosaminoglycans on host cell surface also contribute to entry into cells. Once entered into host cells, acidification in the endosome promotes the membrane insertion of the translocation region and formation of a pore, leading to translocation of the GT44 and peptidase C80 domains across the endosomal membrane. This activates the peptidase C80 domain and autocatalytic processing, releasing the N-terminal part (Glucosyltransferase TcdB), which constitutes the active part of the toxin, in the cytosol. In terms of biological role, active form of the toxin, which is released into the host cytosol following autoprocessing and inactivates small GTPases. Acts by mediating monoglucosylation of small GTPases of the Rho family (Rac1, RhoA, RhoB, RhoC, RhoG and Cdc42) in host cells at the conserved threonine residue located in the switch I region ('Thr-37/35'), using UDP-alpha-D-glucose as the sugar donor. Monoglucosylation of host small GTPases completely prevents the recognition of the downstream effector, blocking the GTPases in their inactive form, leading to actin cytoskeleton disruption and cell death, resulting in the loss of colonic epithelial barrier function. The chain is Toxin B from Clostridioides difficile (Peptoclostridium difficile).